Reading from the N-terminus, the 285-residue chain is Glutamate racemase (285 aa).

Substrate-binding positions include 28–29 (DS) and 60–61 (YG). Cysteine 92 serves as the catalytic Proton donor/acceptor. Substrate is bound at residue 93-94 (NT). The active-site Proton donor/acceptor is cysteine 204. 205-206 (TH) lines the substrate pocket.

It belongs to the aspartate/glutamate racemases family.

The catalysed reaction is L-glutamate = D-glutamate. It functions in the pathway cell wall biogenesis; peptidoglycan biosynthesis. Functionally, provides the (R)-glutamate required for cell wall biosynthesis. This is Glutamate racemase from Escherichia fergusonii (strain ATCC 35469 / DSM 13698 / CCUG 18766 / IAM 14443 / JCM 21226 / LMG 7866 / NBRC 102419 / NCTC 12128 / CDC 0568-73).